Here is a 124-residue protein sequence, read N- to C-terminus: Early nodulin-5 (124 aa).

The first 12 residues, isoleucine 1–serine 12, serve as a signal peptide directing secretion.

Functionally, involved in the infection process during the plant-rhizobium interaction. In Vicia sativa (Spring vetch), this protein is Early nodulin-5 (ENOD5).